A 389-amino-acid chain; its full sequence is Lipid-A-disaccharide synthase (389 aa).

The protein belongs to the LpxB family.

It carries out the reaction a lipid X + a UDP-2-N,3-O-bis[(3R)-3-hydroxyacyl]-alpha-D-glucosamine = a lipid A disaccharide + UDP + H(+). The protein operates within bacterial outer membrane biogenesis; LPS lipid A biosynthesis. Functionally, condensation of UDP-2,3-diacylglucosamine and 2,3-diacylglucosamine-1-phosphate to form lipid A disaccharide, a precursor of lipid A, a phosphorylated glycolipid that anchors the lipopolysaccharide to the outer membrane of the cell. This Burkholderia orbicola (strain MC0-3) protein is Lipid-A-disaccharide synthase.